A 578-amino-acid chain; its full sequence is V-type ATP synthase alpha chain (578 aa).

An ATP-binding site is contributed by 228–235 (GPFGSGKT).

The protein belongs to the ATPase alpha/beta chains family.

The catalysed reaction is ATP + H2O + 4 H(+)(in) = ADP + phosphate + 5 H(+)(out). Produces ATP from ADP in the presence of a proton gradient across the membrane. The V-type alpha chain is a catalytic subunit. In Thermus thermophilus (strain ATCC BAA-163 / DSM 7039 / HB27), this protein is V-type ATP synthase alpha chain.